We begin with the raw amino-acid sequence, 116 residues long: Large ribosomal subunit protein bL19 (116 aa).

The protein belongs to the bacterial ribosomal protein bL19 family.

Its function is as follows. This protein is located at the 30S-50S ribosomal subunit interface and may play a role in the structure and function of the aminoacyl-tRNA binding site. The polypeptide is Large ribosomal subunit protein bL19 (Clostridium novyi (strain NT)).